The following is a 475-amino-acid chain: Sulfate adenylyltransferase subunit 1 (475 aa).

In terms of domain architecture, tr-type G spans 25 to 239 (KSLLRFLTCG…EVLETVEIQR (215 aa)). The tract at residues 34 to 41 (GSVDDGKS) is G1. Position 34-41 (34-41 (GSVDDGKS)) interacts with GTP. The tract at residues 92–96 (GITID) is G2. The tract at residues 113-116 (DTPG) is G3. GTP contacts are provided by residues 113-117 (DTPGH) and 168-171 (NKMD). Residues 168–171 (NKMD) form a G4 region. The segment at 206–208 (SAL) is G5.

Belongs to the TRAFAC class translation factor GTPase superfamily. Classic translation factor GTPase family. CysN/NodQ subfamily. Heterodimer composed of CysD, the smaller subunit, and CysN.

It carries out the reaction sulfate + ATP + H(+) = adenosine 5'-phosphosulfate + diphosphate. It functions in the pathway sulfur metabolism; hydrogen sulfide biosynthesis; sulfite from sulfate: step 1/3. With CysD forms the ATP sulfurylase (ATPS) that catalyzes the adenylation of sulfate producing adenosine 5'-phosphosulfate (APS) and diphosphate, the first enzymatic step in sulfur assimilation pathway. APS synthesis involves the formation of a high-energy phosphoric-sulfuric acid anhydride bond driven by GTP hydrolysis by CysN coupled to ATP hydrolysis by CysD. The polypeptide is Sulfate adenylyltransferase subunit 1 (Escherichia coli O127:H6 (strain E2348/69 / EPEC)).